Reading from the N-terminus, the 493-residue chain is 3-octaprenyl-4-hydroxybenzoate carboxy-lyase (493 aa).

Asparagine 172 contacts Mn(2+). Prenylated FMN-binding positions include 175 to 177 (IYR), 189 to 191 (RWL), and 194 to 195 (RG). Glutamate 238 is a Mn(2+) binding site. Catalysis depends on aspartate 287, which acts as the Proton donor.

Belongs to the UbiD family. As to quaternary structure, homohexamer. Requires prenylated FMN as cofactor. Mn(2+) is required as a cofactor.

The protein localises to the cell membrane. The enzyme catalyses a 4-hydroxy-3-(all-trans-polyprenyl)benzoate + H(+) = a 2-(all-trans-polyprenyl)phenol + CO2. Its pathway is cofactor biosynthesis; ubiquinone biosynthesis. Its function is as follows. Catalyzes the decarboxylation of 3-octaprenyl-4-hydroxy benzoate to 2-octaprenylphenol, an intermediate step in ubiquinone biosynthesis. The chain is 3-octaprenyl-4-hydroxybenzoate carboxy-lyase from Shewanella piezotolerans (strain WP3 / JCM 13877).